The sequence spans 440 residues: WAS/WASL-interacting protein family member 2 (440 aa).

The span at 1-18 (MPIPPPPPPPPGPPPPPT) shows a compositional bias: pro residues. Residues 1-38 (MPIPPPPPPPPGPPPPPTFNQANTEQPKLSRDEQRNRG) form a disordered region. In terms of domain architecture, WH2 spans 36-53 (NRGALLQDICKGTKLKKV). The residue at position 37 (arginine 37) is an Asymmetric dimethylarginine. The interval 49–52 (KLKK) is binds actin. Disordered stretches follow at residues 56–386 (VNDR…RDSI) and 419–440 (RVYPSKTNRAARGAPPLPPILR). Residues 116-132 (PSSRAAAPRPPGSAASG) show a composition bias toward low complexity. Composition is skewed to pro residues over residues 176 to 193 (APPPPPPGRRANAPPTPL), 225 to 236 (PAPPPVKPPPSP), 249 to 262 (APPPPPYRQPPGVP), and 356 to 378 (RGKPPPPPSRTPAGPPPPPPPPL).

This sequence belongs to the verprolin family. In terms of assembly, interacts with WASL and WASP, and this interaction results in cytoplasmic relocation of these two proteins along actin filaments. Interacts with NCK2 resulting in the localization to sites of focal adhesions.

The protein localises to the cytoplasm. The protein resides in the cytoskeleton. Its function is as follows. Plays an active role in the formation of cell surface protrusions downstream of activated PDGFB receptors. Plays an important role in actin-microspike formation through cooperation with WASL. May cooperate with WASP and WASL to induce mobilization and reorganization of the actin filament system. This Mus musculus (Mouse) protein is WAS/WASL-interacting protein family member 2 (Wipf2).